Consider the following 130-residue polypeptide: Small ribosomal subunit protein uS8 (130 aa).

It belongs to the universal ribosomal protein uS8 family. Part of the 30S ribosomal subunit. Contacts proteins S5 and S12.

Its function is as follows. One of the primary rRNA binding proteins, it binds directly to 16S rRNA central domain where it helps coordinate assembly of the platform of the 30S subunit. This Phytoplasma australiense protein is Small ribosomal subunit protein uS8.